Consider the following 380-residue polypeptide: Glutamate 5-kinase (380 aa).

Position 20 (Lys-20) interacts with ATP. Positions 59, 146, and 158 each coordinate substrate. 220–226 serves as a coordination point for ATP; sequence TGGMYSK. One can recognise a PUA domain in the interval 285–363; it reads SGTVTVDEGA…HEVAAILGDA (79 aa).

Belongs to the glutamate 5-kinase family.

The protein localises to the cytoplasm. The enzyme catalyses L-glutamate + ATP = L-glutamyl 5-phosphate + ADP. It participates in amino-acid biosynthesis; L-proline biosynthesis; L-glutamate 5-semialdehyde from L-glutamate: step 1/2. In terms of biological role, catalyzes the transfer of a phosphate group to glutamate to form L-glutamate 5-phosphate. This Nitratidesulfovibrio vulgaris (strain ATCC 29579 / DSM 644 / CCUG 34227 / NCIMB 8303 / VKM B-1760 / Hildenborough) (Desulfovibrio vulgaris) protein is Glutamate 5-kinase.